We begin with the raw amino-acid sequence, 433 residues long: Inositol hexakisphosphate kinase 1 (433 aa).

Residues 100–160 (ETVEQDDTPE…SPKVELHSHS (61 aa)) form a disordered region. Residues 113-123 (PRRKHSRRSLH) are compositionally biased toward basic residues. Residues 139–149 (SFETSESSQET) show a composition bias toward polar residues. Basic and acidic residues predominate over residues 150–160 (KSPKVELHSHS). Residue serine 151 is modified to Phosphoserine. 220 to 228 (PCVLDLKMG) is a substrate binding site. Positions 362–383 (PLCGPSTSPSNTSLEAGPSSPP) are disordered. The segment covering 366–375 (PSTSPSNTSL) has biased composition (polar residues).

Belongs to the inositol phosphokinase (IPK) family.

The protein resides in the cytoplasm. Its subcellular location is the nucleus. It carries out the reaction 1D-myo-inositol hexakisphosphate + ATP = 5-diphospho-1D-myo-inositol 1,2,3,4,6-pentakisphosphate + ADP. It catalyses the reaction 1-diphospho-1D-myo-inositol 2,3,4,5,6-pentakisphosphate + ATP + H(+) = 1,5-bis(diphospho)-1D-myo-inositol 2,3,4,6-tetrakisphosphate + ADP. Converts inositol hexakisphosphate (InsP6) to diphosphoinositol pentakisphosphate (InsP7/PP-InsP5). Converts 1,3,4,5,6-pentakisphosphate (InsP5) to PP-InsP4. This is Inositol hexakisphosphate kinase 1 (Ip6k1) from Rattus norvegicus (Rat).